Here is a 255-residue protein sequence, read N- to C-terminus: Protein DAL82 (255 aa).

The segment at 87-149 is disordered; sequence PEHPRPRTKF…SQPLPLDSIT (63 aa). Positions 128–138 are enriched in basic and acidic residues; the sequence is PNNHSSDDEHS.

Positive regulator of allophanate-induced genes in S.cerevisiae. This Saccharomyces cerevisiae (strain ATCC 204508 / S288c) (Baker's yeast) protein is Protein DAL82 (DAL82).